Here is a 112-residue protein sequence, read N- to C-terminus: ATP synthase epsilon chain (112 aa).

This sequence belongs to the ATPase epsilon chain family. As to quaternary structure, F-type ATPases have 2 components, CF(1) - the catalytic core - and CF(0) - the membrane proton channel. CF(1) has five subunits: alpha(3), beta(3), gamma(1), delta(1), epsilon(1). CF(0) has three main subunits: a, b and c.

The protein resides in the cell inner membrane. In terms of biological role, produces ATP from ADP in the presence of a proton gradient across the membrane. The protein is ATP synthase epsilon chain of Rickettsia peacockii (strain Rustic).